Here is a 165-residue protein sequence, read N- to C-terminus: MKFIIILFTLISIVTAAQRIYNKDYSYYGCNSYCDKASDQEDACGYYDDDVSYQDYYGCLCGNEIFLSNLKSCDCFTSIIASVSKSVCSKATEDSDWGYYDDSTSSIMDFFTADNTPASNTGMTTQTDGAINDNQNTGSKTSSGAANYLTSFSIGTFFVFVLGLI.

Positions 1–16 (MKFIIILFTLISIVTA) are cleaved as a signal peptide. Serine 143 carries GPI-anchor amidated serine lipidation. A propeptide spans 144–165 (GAANYLTSFSIGTFFVFVLGLI) (removed in mature form).

It belongs to the IHD1 family. In terms of processing, the GPI-anchor is attached to the protein in the endoplasmic reticulum and serves to target the protein to the cell surface. There, the glucosamine-inositol phospholipid moiety is cleaved off and the GPI-modified mannoprotein is covalently attached via its lipidless GPI glycan remnant to the 1,6-beta-glucan of the outer cell wall layer.

Its subcellular location is the secreted. It localises to the cell wall. The protein localises to the membrane. Functionally, probable GPI-anchored cell wall protein that may be involved in cell wall organization, hyphal growth, as well as in virulence. This Candida albicans (strain SC5314 / ATCC MYA-2876) (Yeast) protein is Probable cell wall protein PGA15 (PGA15).